The following is a 262-amino-acid chain: Apolipoprotein A-I-2 (262 aa).

The signal sequence occupies residues 1–18; that stretch reads MQFLALALTILLAAATQA. Residues 32–63 form a 3 X approximate tandem repeats region; it reads VKVAMMEYMAQVKETAQRSIDHLDDTEYKEYK. Tandem repeats lie at residues 64–85 and 87–107. The interval 64–262 is 10 X approximate tandem repeats; sequence VQLSQSLDNL…YETISQAMKA (199 aa). One copy of the 3; half-length repeat lies at 108–118; that stretch reads KDVEELRSQLE. 5 consecutive repeat copies span residues 119-140, 141-162, 163-184, 185-206, and 207-228. One copy of the 9; half-length repeat lies at 229 to 239; it reads PLTTDFKGQLG. Copy 10 of the repeat occupies 240-262; it reads PAAEQAKEKLMALYETISQAMKA.

This sequence belongs to the apolipoprotein A1/A4/E family.

The protein resides in the secreted. In terms of biological role, participates in the reverse transport of cholesterol from tissues to the liver for excretion by promoting cholesterol efflux from tissues and by acting as a cofactor for the lecithin cholesterol acyltransferase (LCAT). In Oncorhynchus mykiss (Rainbow trout), this protein is Apolipoprotein A-I-2.